We begin with the raw amino-acid sequence, 465 residues long: Hepatocyte nuclear factor 6 (465 aa).

2 disordered regions span residues Gly-15–His-84 and Ser-119–Leu-141. A compositionally biased stretch (basic residues) spans Pro-123–Arg-140. A DNA-binding region (CUT) is located at residues Gly-283 to Ala-369. Residues Pro-385 to Trp-444 constitute a DNA-binding region (homeobox). The tract at residues Asp-442 to Ala-465 is disordered. The segment covering Gly-448–Ala-465 has biased composition (low complexity).

Belongs to the CUT homeobox family. Binds DNA as a monomer. In terms of tissue distribution, expressed in liver, brain, spleen and testis.

It is found in the nucleus. In terms of biological role, transcriptional activator. Binds the consensus sequence 5'-DHWATTGAYTWWD-3' on a variety of gene promoters such as those of HNF3B and TTR. Important for liver genes transcription. The affinity of HNF-6-alpha and HNF-6-beta for DNA differs depending on the target sequence. The polypeptide is Hepatocyte nuclear factor 6 (Onecut1) (Rattus norvegicus (Rat)).